Reading from the N-terminus, the 115-residue chain is Protein V2 (115 aa).

It belongs to the geminiviridae protein AV2/V2 family. As to quaternary structure, interacts with host SGS3.

The protein localises to the host cytoplasm. It localises to the host perinuclear region. Functionally, through its interaction with host SGS3, acts as a suppressor of RNA-mediated gene silencing, also known as post-transcriptional gene silencing (PTGS), a mechanism of plant viral defense that limits the accumulation of viral RNAs. This chain is Protein V2, found in Tomato yellow leaf curl China virus (TYLCCNV).